Consider the following 65-residue polypeptide: Putative antitoxin MJECL31 (65 aa).

Belongs to the UPF0165 family.

Its function is as follows. Possibly the antitoxin component of a type II toxin-antitoxin (TA) system. In Methanocaldococcus jannaschii (strain ATCC 43067 / DSM 2661 / JAL-1 / JCM 10045 / NBRC 100440) (Methanococcus jannaschii), this protein is Putative antitoxin MJECL31.